The sequence spans 314 residues: Acetaldehyde dehydrogenase (314 aa).

Residue 14-17 (SGNI) participates in NAD(+) binding. Catalysis depends on Cys132, which acts as the Acyl-thioester intermediate. Residues 163–171 (SAGPGTRAN) and Asn291 each bind NAD(+).

The protein belongs to the acetaldehyde dehydrogenase family.

The enzyme catalyses acetaldehyde + NAD(+) + CoA = acetyl-CoA + NADH + H(+). The chain is Acetaldehyde dehydrogenase from Polaromonas sp. (strain JS666 / ATCC BAA-500).